A 380-amino-acid polypeptide reads, in one-letter code: Omega-3 fatty acid desaturase, endoplasmic reticulum (380 aa).

The helical transmembrane segment at 59–78 (VLVVTALAASAISFNSWFFW) threads the bilayer. A Histidine box-1 motif is present at residues 97 to 101 (HDCGH). A Histidine box-2 motif is present at residues 133 to 137 (HRTHH). Helical transmembrane passes span 208 to 231 (GVVT…LTIG) and 238 to 256 (LYGV…VTYL). A Histidine box-3 motif is present at residues 300–304 (HVIHH).

This sequence belongs to the fatty acid desaturase type 1 family.

Its subcellular location is the endoplasmic reticulum membrane. It functions in the pathway lipid metabolism; polyunsaturated fatty acid biosynthesis. In terms of biological role, microsomal (ER) omega-3 fatty acid desaturase introduces the third double bond in the biosynthesis of 18:3 fatty acids, important constituents of plant membranes. It is thought to use cytochrome b5 as an electron donor and to act on fatty acids esterified to phosphatidylcholine and, possibly, other phospholipids. The protein is Omega-3 fatty acid desaturase, endoplasmic reticulum (ARG1) of Vigna radiata var. radiata (Mung bean).